Reading from the N-terminus, the 61-residue chain is MAKKALIAKAARKPKFGVRGYTRCQRCGRPHSVYRKFGLCRVCLREMAHRGELPGVTKSSW.

Residues Cys-24, Cys-27, Cys-40, and Cys-43 each contribute to the Zn(2+) site.

This sequence belongs to the universal ribosomal protein uS14 family. Zinc-binding uS14 subfamily. In terms of assembly, part of the 30S ribosomal subunit. Contacts proteins S3 and S10. Zn(2+) serves as cofactor.

Functionally, binds 16S rRNA, required for the assembly of 30S particles and may also be responsible for determining the conformation of the 16S rRNA at the A site. In Streptomyces avermitilis (strain ATCC 31267 / DSM 46492 / JCM 5070 / NBRC 14893 / NCIMB 12804 / NRRL 8165 / MA-4680), this protein is Small ribosomal subunit protein uS14B.